The following is a 410-amino-acid chain: Peptidase T (410 aa).

Residue histidine 79 coordinates Zn(2+). Aspartate 81 is a catalytic residue. Aspartate 142 is a Zn(2+) binding site. The Proton acceptor role is filled by glutamate 176. The Zn(2+) site is built by glutamate 177, aspartate 199, and histidine 381.

The protein belongs to the peptidase M20B family. Requires Zn(2+) as cofactor.

It is found in the cytoplasm. The enzyme catalyses Release of the N-terminal residue from a tripeptide.. Cleaves the N-terminal amino acid of tripeptides. The protein is Peptidase T of Bacillus licheniformis (strain ATCC 14580 / DSM 13 / JCM 2505 / CCUG 7422 / NBRC 12200 / NCIMB 9375 / NCTC 10341 / NRRL NRS-1264 / Gibson 46).